Consider the following 100-residue polypeptide: Putative antiporter subunit mnhF2 (100 aa).

Helical transmembrane passes span 6–26, 38–58, and 62–82; these read TNFF…IGLF, VVAF…VSVI, and VSFL…SVSI.

This sequence belongs to the CPA3 antiporters (TC 2.A.63) subunit F family. As to quaternary structure, may form a heterooligomeric complex that consists of seven subunits: mnhA2, mnhB2, mnhC2, mnhD2, mnhE2, mnhF2 and mnhG2.

The protein localises to the cell membrane. The sequence is that of Putative antiporter subunit mnhF2 (mnhF2) from Staphylococcus haemolyticus (strain JCSC1435).